Consider the following 1770-residue polypeptide: Transposon Ty2-OR1 Gag-Pol polyprotein (1770 aa).

Polar residues-rich tracts occupy residues 1 to 39 and 49 to 60; these read MESQ…SASN and KVNSQQETTPGT. Disordered stretches follow at residues 1 to 88 and 359 to 449; these read MESQ…YQQH and QHSE…SNDE. The segment at 295-397 is RNA-binding; that stretch reads ENNINVSDRL…SSKPRAAKAH (103 aa). Residues 369–381 show a composition bias toward low complexity; it reads TSPNTTNTKVTTR. 2 stretches are compositionally biased toward polar residues: residues 399–408 and 415–435; these read IATSSKFSRV and ESTV…GQQQ. The active-site For protease activity; shared with dimeric partner is the aspartate 457. The integrase-type zinc finger-like stretch occupies residues 579–636; the sequence is NVNKSKSVNKYPYPLIHRMLGHANFRSIQKSLKKNAVTYLKESDIEWSNASTYQCPDC. The Integrase catalytic domain occupies 656–831; the sequence is ESYEPFQYLH…AGLDITTILP (176 aa). 2 residues coordinate Mg(2+): aspartate 667 and aspartate 732. Polar residues-rich tracts occupy residues 916–929, 1009–1024, and 1065–1082; these read FIEQ…YDQN, ESDT…FTAR, and QRNS…STPS. Disordered regions lie at residues 916–935, 1005–1038, and 1057–1205; these read FIEQ…SDHD, GGTI…MIDL, and GGTE…TEIE. Positions 1193–1227 match the Bipartite nuclear localization signal motif; that stretch reads KKRSLEDNETEIEVSRDTWNNKNMRSLEPPRSKKR. Residues 1353–1491 form the Reverse transcriptase Ty1/copia-type domain; the sequence is NDYYITQLDI…DILGLEIKYQ (139 aa). Positions 1361, 1442, 1443, 1625, 1667, and 1700 each coordinate Mg(2+). The 143-residue stretch at 1625 to 1767 folds into the RNase H Ty1/copia-type domain; that stretch reads DASYGNQPYY…IKTFKLLTNK (143 aa).

In terms of assembly, the capsid protein forms a homotrimer, from which the VLPs are assembled. The protease is a homodimer, whose active site consists of two apposed aspartic acid residues. Post-translationally, initially, virus-like particles (VLPs) are composed of the structural unprocessed proteins Gag and Gag-Pol, and also contain the host initiator methionine tRNA (tRNA(i)-Met) which serves as a primer for minus-strand DNA synthesis, and a dimer of genomic Ty RNA. Processing of the polyproteins occurs within the particle and proceeds by an ordered pathway, called maturation. First, the protease (PR) is released by autocatalytic cleavage of the Gag-Pol polyprotein, and this cleavage is a prerequisite for subsequent processing at the remaining sites to release the mature structural and catalytic proteins. Maturation takes place prior to the RT reaction and is required to produce transposition-competent VLPs.

It is found in the cytoplasm. The protein resides in the nucleus. The catalysed reaction is DNA(n) + a 2'-deoxyribonucleoside 5'-triphosphate = DNA(n+1) + diphosphate. It catalyses the reaction Endonucleolytic cleavage to 5'-phosphomonoester.. Its function is as follows. Capsid protein (CA) is the structural component of the virus-like particle (VLP), forming the shell that encapsulates the retrotransposons dimeric RNA genome. The particles are assembled from trimer-clustered units and there are holes in the capsid shells that allow for the diffusion of macromolecules. CA also has nucleocapsid-like chaperone activity, promoting primer tRNA(i)-Met annealing to the multipartite primer-binding site (PBS), dimerization of Ty2 RNA and initiation of reverse transcription. In terms of biological role, the aspartyl protease (PR) mediates the proteolytic cleavages of the Gag and Gag-Pol polyproteins after assembly of the VLP. Functionally, reverse transcriptase/ribonuclease H (RT) is a multifunctional enzyme that catalyzes the conversion of the retro-elements RNA genome into dsDNA within the VLP. The enzyme displays a DNA polymerase activity that can copy either DNA or RNA templates, and a ribonuclease H (RNase H) activity that cleaves the RNA strand of RNA-DNA heteroduplexes during plus-strand synthesis and hydrolyzes RNA primers. The conversion leads to a linear dsDNA copy of the retrotransposon that includes long terminal repeats (LTRs) at both ends. Integrase (IN) targets the VLP to the nucleus, where a subparticle preintegration complex (PIC) containing at least integrase and the newly synthesized dsDNA copy of the retrotransposon must transit the nuclear membrane. Once in the nucleus, integrase performs the integration of the dsDNA into the host genome. This chain is Transposon Ty2-OR1 Gag-Pol polyprotein (TY2B-OR1), found in Saccharomyces cerevisiae (strain ATCC 204508 / S288c) (Baker's yeast).